The primary structure comprises 211 residues: RING finger protein 222 (211 aa).

The RING-type zinc finger occupies 14–65; the sequence is CPVCYEKFRDLDGASRTLSCGHVFCHDCLVKYLLSTRVDGQVQRTIVCPICR. The helical transmembrane segment at 187–207 threads the bilayer; that stretch reads LITLIAVVAVVAAILPWVLLV.

Its subcellular location is the membrane. The polypeptide is RING finger protein 222 (Rnf222) (Mus musculus (Mouse)).